A 527-amino-acid polypeptide reads, in one-letter code: Protein SDS24 (527 aa).

Low complexity-rich tracts occupy residues 1-22 and 55-74; these read MAST…LPTS and TPPT…TPAP. Residues 1 to 75 are disordered; sequence MASTSNTFPP…PGCAATPAPL (75 aa). Ser-94 carries the post-translational modification Phosphoserine. CBS domains are found at residues 114 to 175, 198 to 256, 283 to 342, and 443 to 512; these read IEQN…KITV, LTPK…NARS, TSRQ…QYPL, and LNSH…GNKE. Residues 424 to 447 are compositionally biased toward low complexity; sequence AQSSANGATPMSKSSSSTSLNSHS. Disordered regions lie at residues 424–478 and 508–527; these read AQSS…TNTP and TGNK…SIAM. 2 positions are modified to phosphoserine: Ser-458 and Ser-524.

It belongs to the SDS23 family.

It is found in the cytoplasm. Its subcellular location is the nucleus. Involved in DNA replication and cell separation during budding. The sequence is that of Protein SDS24 (SDS24) from Saccharomyces cerevisiae (strain YJM789) (Baker's yeast).